The following is a 216-amino-acid chain: Elongation factor Ts (216 aa).

Residues 81–84 (TDFV) are involved in Mg(2+) ion dislocation from EF-Tu.

Belongs to the EF-Ts family.

It localises to the cytoplasm. Associates with the EF-Tu.GDP complex and induces the exchange of GDP to GTP. It remains bound to the aminoacyl-tRNA.EF-Tu.GTP complex up to the GTP hydrolysis stage on the ribosome. This chain is Elongation factor Ts, found in Geotalea daltonii (strain DSM 22248 / JCM 15807 / FRC-32) (Geobacter daltonii).